Consider the following 429-residue polypeptide: Glucose-1-phosphate adenylyltransferase (429 aa).

Residues G162, 177 to 178 (EK), and S209 contribute to the alpha-D-glucose 1-phosphate site.

This sequence belongs to the bacterial/plant glucose-1-phosphate adenylyltransferase family. Homotetramer.

It carries out the reaction alpha-D-glucose 1-phosphate + ATP + H(+) = ADP-alpha-D-glucose + diphosphate. Its pathway is glycan biosynthesis; glycogen biosynthesis. In terms of biological role, involved in the biosynthesis of ADP-glucose, a building block required for the elongation reactions to produce glycogen. Catalyzes the reaction between ATP and alpha-D-glucose 1-phosphate (G1P) to produce pyrophosphate and ADP-Glc. This Cyanothece sp. (strain PCC 7425 / ATCC 29141) protein is Glucose-1-phosphate adenylyltransferase.